Reading from the N-terminus, the 689-residue chain is Small ribosomal subunit protein mS39 (689 aa).

A mitochondrion-targeting transit peptide spans 1 to 37; that stretch reads MAVVSAVRWLGLRSRLGQPLTGRRAGLCEQARSCRFY. Lys-126 carries the N6-acetyllysine modification. 10 PPR repeats span residues 149-183, 184-219, 255-289, 290-330, 331-367, 368-409, 412-446, 454-488, 489-523, and 572-606; these read IKDI…GTTV, SLET…EALE, NEHS…RLHA, DVYT…KVKP, NLQT…GIEP, SLAT…SPKD, DDKF…DNWK, RNFY…AYFP, HSQT…GHTF, and PATS…NKIP. The segment at 665 to 689 is disordered; the sequence is NLTALTSDSDTDSSSDSDSDTSEGK. Over residues 673–689 the composition is skewed to acidic residues; that stretch reads SDTDSSSDSDSDTSEGK.

This sequence belongs to the mitochondrion-specific ribosomal protein mS39 family. In terms of assembly, component of the mitochondrial small ribosomal subunit (mt-SSU). Mature mammalian 55S mitochondrial ribosomes consist of a small (28S) and a large (39S) subunit. The 28S small subunit contains a 12S ribosomal RNA (12S mt-rRNA) and 30 different proteins. The 39S large subunit contains a 16S rRNA (16S mt-rRNA), a copy of mitochondrial valine transfer RNA (mt-tRNA(Val)), which plays an integral structural role, and 52 different proteins. Associated with the 12S mitochondrial rRNA (12S mt-rRNA). As to expression, abundant in testes, skeletal muscle and heart tissue.

The protein localises to the mitochondrion. In terms of biological role, mitochondrial RNA-binding protein that has a role in mitochondrial translation. In Homo sapiens (Human), this protein is Small ribosomal subunit protein mS39 (PTCD3).